The chain runs to 292 residues: Protease HtpX (292 aa).

The next 2 helical transmembrane spans lie at 5–25 and 34–54; these read IFLFLLTNLAVLMLAGIVMSL and SGLLVMAAIFGFGGSFISLLL. H140 is a binding site for Zn(2+). Residue E141 is part of the active site. Zn(2+) is bound at residue H144. Helical transmembrane passes span 155–175 and 193–213; these read LLQGVLNTFVIVLARVVGGII and IIVFALEMVFGLFATMIAMWF. E218 is a binding site for Zn(2+).

It belongs to the peptidase M48B family. Zn(2+) is required as a cofactor.

Its subcellular location is the cell inner membrane. This chain is Protease HtpX, found in Xanthomonas axonopodis pv. citri (strain 306).